The following is a 528-amino-acid chain: Bifunctional dihydrofolate reductase-thymidylate synthase (528 aa).

The segment at 1–20 (MASELLANPTNGSGITRPDP) is disordered. A DHFR domain is found at 23–200 (TYQVVVAATQ…IRYCFTTYVR (178 aa)). Residue V27 coordinates substrate. NADP(+)-binding positions include A29 and 35–41 (GIGKDGK). D49 serves as a coordination point for substrate. NADP(+) contacts are provided by residues 73 to 75 (RKT) and 94 to 97 (LTRS). Substrate is bound by residues I136, Y142, and T157. NADP(+) is bound at residue 137–144 (GGGQIYRE). Positions 202 to 528 (RNSVAELTSQ…HQKIEMKMAV (327 aa)) are thymidylate synthase. R264 is a dUMP binding site. The active site involves C409. Residues H410, 428–432 (QRSAD), N440, and 470–472 (HVY) contribute to the dUMP site.

This sequence in the N-terminal section; belongs to the dihydrofolate reductase family. In the C-terminal section; belongs to the thymidylate synthase family.

The enzyme catalyses (6S)-5,6,7,8-tetrahydrofolate + NADP(+) = 7,8-dihydrofolate + NADPH + H(+). It carries out the reaction dUMP + (6R)-5,10-methylene-5,6,7,8-tetrahydrofolate = 7,8-dihydrofolate + dTMP. Its pathway is cofactor biosynthesis; tetrahydrofolate biosynthesis; 5,6,7,8-tetrahydrofolate from 7,8-dihydrofolate: step 1/1. Bifunctional enzyme. Involved in de novo dTMP biosynthesis. Key enzyme in folate metabolism. Can play two different roles depending on the source of dihydrofolate: de novo synthesis of tetrahydrofolate or recycling of the dihydrofolate released as one of the end products of the TS catalyzed reaction. Catalyzes an essential reaction for de novo glycine and purine synthesis, DNA precursor synthesis, and for the conversion of dUMP to dTMP. This is Bifunctional dihydrofolate reductase-thymidylate synthase from Daucus carota (Wild carrot).